Here is a 452-residue protein sequence, read N- to C-terminus: Tubulin gamma chain (452 aa).

142 to 148 (AGGTGSG) provides a ligand contact to GTP.

The protein belongs to the tubulin family.

The protein resides in the cytoplasm. The protein localises to the cytoskeleton. Its subcellular location is the microtubule organizing center. It is found in the centrosome. Its function is as follows. Tubulin is the major constituent of microtubules. The gamma chain is found at microtubule organizing centers (MTOC) such as the spindle poles or the centrosome, suggesting that it is involved in the minus-end nucleation of microtubule assembly. This is Tubulin gamma chain (G-TUB) from Plasmodium falciparum (isolate NF54).